A 505-amino-acid chain; its full sequence is Glycerol kinase (505 aa).

Threonine 12 lines the ADP pocket. Positions 12, 13, and 14 each coordinate ATP. Threonine 12 provides a ligand contact to sn-glycerol 3-phosphate. Arginine 16 serves as a coordination point for ADP. Sn-glycerol 3-phosphate-binding residues include arginine 82, glutamate 83, tyrosine 134, and aspartate 249. The glycerol site is built by arginine 82, glutamate 83, tyrosine 134, aspartate 249, and glutamine 250. Threonine 271 and glycine 315 together coordinate ADP. ATP-binding residues include threonine 271, glycine 315, glutamine 319, and glycine 416. Residues glycine 416 and asparagine 420 each coordinate ADP.

It belongs to the FGGY kinase family.

It catalyses the reaction glycerol + ATP = sn-glycerol 3-phosphate + ADP + H(+). It participates in polyol metabolism; glycerol degradation via glycerol kinase pathway; sn-glycerol 3-phosphate from glycerol: step 1/1. Its activity is regulated as follows. Inhibited by fructose 1,6-bisphosphate (FBP). Its function is as follows. Key enzyme in the regulation of glycerol uptake and metabolism. Catalyzes the phosphorylation of glycerol to yield sn-glycerol 3-phosphate. The polypeptide is Glycerol kinase (Mycolicibacterium vanbaalenii (strain DSM 7251 / JCM 13017 / BCRC 16820 / KCTC 9966 / NRRL B-24157 / PYR-1) (Mycobacterium vanbaalenii)).